Reading from the N-terminus, the 251-residue chain is Triosephosphate isomerase (251 aa).

9-11 (NWK) contacts substrate. The active-site Electrophile is the histidine 95. The active-site Proton acceptor is glutamate 167. Residues glycine 173, serine 213, and 234 to 235 (GG) each bind substrate.

It belongs to the triosephosphate isomerase family. In terms of assembly, homodimer.

It localises to the cytoplasm. It catalyses the reaction D-glyceraldehyde 3-phosphate = dihydroxyacetone phosphate. Its pathway is carbohydrate biosynthesis; gluconeogenesis. It functions in the pathway carbohydrate degradation; glycolysis; D-glyceraldehyde 3-phosphate from glycerone phosphate: step 1/1. Functionally, involved in the gluconeogenesis. Catalyzes stereospecifically the conversion of dihydroxyacetone phosphate (DHAP) to D-glyceraldehyde-3-phosphate (G3P). This Lactobacillus gasseri (strain ATCC 33323 / DSM 20243 / BCRC 14619 / CIP 102991 / JCM 1131 / KCTC 3163 / NCIMB 11718 / NCTC 13722 / AM63) protein is Triosephosphate isomerase.